Here is a 472-residue protein sequence, read N- to C-terminus: Probable serine/threonine-protein kinase At1g01540 (472 aa).

A helical transmembrane segment spans residues 24-44 (LWVVIGILLGSLIVIALFLLS). Phosphothreonine is present on residues T67 and T143. The Protein kinase domain occupies 154–431 (LCEENVIGEG…IHMLEAEDLL (278 aa)). ATP-binding positions include 160 to 168 (IGEGGYGIV) and K182. Residue Y227 is modified to Phosphotyrosine. The active-site Proton acceptor is the D280. S284 is subject to Phosphoserine. Phosphothreonine is present on residues T314 and T319. At Y327 the chain carries Phosphotyrosine. A compositionally biased stretch (basic and acidic residues) spans 437–449 (RTTRDHGSRERQE). Positions 437–472 (RTTRDHGSRERQETAVVAAGSESGESGSRHHQQKQR) are disordered. A compositionally biased stretch (low complexity) spans 451–462 (AVVAAGSESGES).

It belongs to the protein kinase superfamily. Ser/Thr protein kinase family.

It is found in the membrane. It catalyses the reaction L-seryl-[protein] + ATP = O-phospho-L-seryl-[protein] + ADP + H(+). The enzyme catalyses L-threonyl-[protein] + ATP = O-phospho-L-threonyl-[protein] + ADP + H(+). This chain is Probable serine/threonine-protein kinase At1g01540, found in Arabidopsis thaliana (Mouse-ear cress).